We begin with the raw amino-acid sequence, 620 residues long: MMENNRNYLIAIALSVMVVLGWQFFYMNPRIEAQRQAEQAQQAQQAKTPATQATPGAAVNGALPGQTQASATTSREDAVAKSARVEINTEALSGSINLTGARLDDLRLKGYHETVDKTSPIITLLNPADTKDGYFAEIGFIGGEKSGSVPGPSTVWTVKDGQTLTETTPVTLTYTNETGLTFSRKISVDKHYMFTIEDTVANAGGADISLAPYGRVTRYNKPAVASTYVLHEGFIGVMGSGDGKFASVEAKYAAIEKENETNAKATGGWLGITDKYWAATLVPPQSLAYDSRFSHFTDGQARFQADYKNDPVTIAPGQSTTLKTLLFAGAKEVPVVDGYALDKSWFGQAFTNLFAGAKDTVQQYDIPRFDLLIDWGWFYFLTKPMFKLMDFFFRQVGNFGVAILLTTIAVKLLFFPLASKQYASMANMKRMQPKMEELKAKHGDDRMALQQAMMELYKTEKINPVAGCWPLLLQIPVFFALYKVIYITIEMRHAPFFGWIHDLSAPDPTSFVNLFGLLPFESPAMLHLGIWPIIMGITMFVQMRMNPTPPDPTQAMLFNWMPLVFTFMLGSFPAGLVIYWAWNNTLSVLQQSIIMKRHGVKIELFDNLKGLFQRKSAKTK.

Residues 7–27 (NYLIAIALSVMVVLGWQFFYM) form a helical membrane-spanning segment. Residues 37-58 (AEQAQQAQQAKTPATQATPGAA) show a composition bias toward low complexity. Residues 37 to 77 (AEQAQQAQQAKTPATQATPGAAVNGALPGQTQASATTSRED) are disordered. A run of 4 helical transmembrane segments spans residues 399–419 (FGVA…PLAS), 469–489 (WPLL…YITI), 514–534 (LFGL…WPII), and 560–580 (WMPL…VIYW).

Belongs to the OXA1/ALB3/YidC family. Type 1 subfamily. Interacts with the Sec translocase complex via SecD. Specifically interacts with transmembrane segments of nascent integral membrane proteins during membrane integration.

Its subcellular location is the cell inner membrane. Required for the insertion and/or proper folding and/or complex formation of integral membrane proteins into the membrane. Involved in integration of membrane proteins that insert both dependently and independently of the Sec translocase complex, as well as at least some lipoproteins. Aids folding of multispanning membrane proteins. This chain is Membrane protein insertase YidC, found in Allorhizobium ampelinum (strain ATCC BAA-846 / DSM 112012 / S4) (Agrobacterium vitis (strain S4)).